Consider the following 252-residue polypeptide: Ubiquinone biosynthesis O-methyltransferase (252 aa).

S-adenosyl-L-methionine contacts are provided by Arg-45, Gly-76, Asp-97, and Met-141.

The protein belongs to the methyltransferase superfamily. UbiG/COQ3 family.

The catalysed reaction is a 3-demethylubiquinol + S-adenosyl-L-methionine = a ubiquinol + S-adenosyl-L-homocysteine + H(+). The enzyme catalyses a 3-(all-trans-polyprenyl)benzene-1,2-diol + S-adenosyl-L-methionine = a 2-methoxy-6-(all-trans-polyprenyl)phenol + S-adenosyl-L-homocysteine + H(+). The protein operates within cofactor biosynthesis; ubiquinone biosynthesis. O-methyltransferase that catalyzes the 2 O-methylation steps in the ubiquinone biosynthetic pathway. In Caulobacter sp. (strain K31), this protein is Ubiquinone biosynthesis O-methyltransferase.